The sequence spans 1212 residues: DNA-directed RNA polymerase subunit beta' (1212 aa).

4 residues coordinate Zn(2+): Cys60, Cys62, Cys75, and Cys78. Positions 450, 452, and 454 each coordinate Mg(2+). Residues Cys819, Cys893, Cys900, and Cys903 each coordinate Zn(2+).

This sequence belongs to the RNA polymerase beta' chain family. The RNAP catalytic core consists of 2 alpha, 1 beta, 1 beta' and 1 omega subunit. When a sigma factor is associated with the core the holoenzyme is formed, which can initiate transcription. The cofactor is Mg(2+). It depends on Zn(2+) as a cofactor.

The catalysed reaction is RNA(n) + a ribonucleoside 5'-triphosphate = RNA(n+1) + diphosphate. In terms of biological role, DNA-dependent RNA polymerase catalyzes the transcription of DNA into RNA using the four ribonucleoside triphosphates as substrates. The polypeptide is DNA-directed RNA polymerase subunit beta' (Streptococcus uberis (strain ATCC BAA-854 / 0140J)).